The following is a 140-amino-acid chain: Short-chain diamines transporter (140 aa).

The next 4 helical transmembrane spans lie at 7-27 (IFHA…AAAL), 36-56 (LALV…IYNL), 79-99 (VGFE…FLEI), and 105-125 (LMLE…FNWL).

It belongs to the proteobacterial antimicrobial compound efflux (PACE) (TC 2.A.117) family.

It localises to the cell inner membrane. In terms of biological role, mediates the efflux of short-chain diamines when energized by an electrochemical gradient. Confers resistance to chlorhexidine, benzalkonium, proflavine and acriflavine. Mediates efflux of both proflavine and acriflavine via an energy-dependent mechanism. The polypeptide is Short-chain diamines transporter (Vibrio parahaemolyticus serotype O3:K6 (strain RIMD 2210633)).